The chain runs to 371 residues: Putative ribonuclease 3 (371 aa).

An RNase III domain is found at 10–136 (AKSVKDKYIP…FLGAVCMAVD (127 aa)).

The protein belongs to the IIV-6 142R family.

The catalysed reaction is Endonucleolytic cleavage to 5'-phosphomonoester.. Its function is as follows. Digests double-stranded RNA. In Frog virus 3 (isolate Goorha) (FV-3), this protein is Putative ribonuclease 3.